A 450-amino-acid polypeptide reads, in one-letter code: Phosphoglucosamine mutase (450 aa).

The active-site Phosphoserine intermediate is S102. Residues S102, D243, D245, and D247 each coordinate Mg(2+). S102 is subject to Phosphoserine.

It belongs to the phosphohexose mutase family. Mg(2+) is required as a cofactor. Post-translationally, activated by phosphorylation.

The enzyme catalyses alpha-D-glucosamine 1-phosphate = D-glucosamine 6-phosphate. In terms of biological role, catalyzes the conversion of glucosamine-6-phosphate to glucosamine-1-phosphate. This Rhizobium etli (strain CIAT 652) protein is Phosphoglucosamine mutase.